The following is a 206-amino-acid chain: Small ribosomal subunit protein uS4 (206 aa).

Residues serine 96–alanine 158 form the S4 RNA-binding domain.

This sequence belongs to the universal ribosomal protein uS4 family. In terms of assembly, part of the 30S ribosomal subunit. Contacts protein S5. The interaction surface between S4 and S5 is involved in control of translational fidelity.

In terms of biological role, one of the primary rRNA binding proteins, it binds directly to 16S rRNA where it nucleates assembly of the body of the 30S subunit. Functionally, with S5 and S12 plays an important role in translational accuracy. This is Small ribosomal subunit protein uS4 from Coxiella burnetii (strain CbuK_Q154) (Coxiella burnetii (strain Q154)).